The chain runs to 531 residues: UDP-glucuronosyltransferase 1A3 (531 aa).

The signal sequence occupies residues 1-25 (MGIQGFLQKLSGLLLLLCALPWAEG). N-linked (GlcNAc...) asparagine glycosylation is found at N116, N139, N293, and N431. Residues 489–505 (VIGFLLAIVLTVVFIVY) form a helical membrane-spanning segment.

Belongs to the UDP-glycosyltransferase family. In terms of assembly, homodimers. Homooligomer. Interacts with UGT1A1, UGT1A4, UGT1A6, UGT1A7, UGT1A8, UGT1A9 and UGT1A10 to form heterodimers.

Its subcellular location is the endoplasmic reticulum membrane. It carries out the reaction glucuronate acceptor + UDP-alpha-D-glucuronate = acceptor beta-D-glucuronoside + UDP + H(+). The catalysed reaction is 17beta-estradiol + UDP-alpha-D-glucuronate = 17beta-estradiol 3-O-(beta-D-glucuronate) + UDP + H(+). It catalyses the reaction 17beta-estradiol + UDP-alpha-D-glucuronate = 17beta-estradiol 17-O-(beta-D-glucuronate) + UDP + H(+). The enzyme catalyses 17alpha-estradiol + UDP-alpha-D-glucuronate = 17alpha-estradiol 3-O-(beta-D-glucuronate) + UDP + H(+). It carries out the reaction estrone + UDP-alpha-D-glucuronate = estrone 3-O-(beta-D-glucuronate) + UDP + H(+). The catalysed reaction is chenodeoxycholate + UDP-alpha-D-glucuronate = chenodeoxycholoyl-24-O-(beta-D-glucuronate) + UDP. It catalyses the reaction deoxycholate + UDP-alpha-D-glucuronate = deoxycholoyl-24-O-(beta-D-glucuronate) + UDP. The enzyme catalyses lithocholate + UDP-alpha-D-glucuronate = lithocholoyl-24-O-(beta-D-glucuronate) + UDP. It carries out the reaction hyodeoxycholate + UDP-alpha-D-glucuronate = hyodeoxycholoyl-24-O-(beta-D-glucuronate) + UDP. The catalysed reaction is hyocholate + UDP-alpha-D-glucuronate = hyocholoyl-24-O-(beta-D-glucuronate) + UDP. It catalyses the reaction calcidiol + UDP-alpha-D-glucuronate = calcidiol 25-O-(beta-D-glucuronide) + UDP + H(+). The enzyme catalyses losartan + UDP-alpha-D-glucuronate = losartan-2-N-beta-D-glucuronide + UDP. It carries out the reaction candesartan + UDP-alpha-D-glucuronate = candesartan-2-N-beta-D-glucuronide + UDP. The catalysed reaction is zolasartan + UDP-alpha-D-glucuronate = zolarsartan-2-N-beta-D-glucuronide + UDP. It catalyses the reaction (E)-ferulate + UDP-alpha-D-glucuronate = (E)-4-O-(beta-D-glucuronosyl)-ferulate + UDP + H(+). The enzyme catalyses (E)-ferulate + UDP-alpha-D-glucuronate = (E)-ferulic acid beta-D-glucuronate ester + UDP. Its function is as follows. UDP-glucuronosyltransferase (UGT) that catalyzes phase II biotransformation reactions in which lipophilic substrates are conjugated with glucuronic acid to increase the metabolite's water solubility, thereby facilitating excretion into either the urine or bile. Essential for the elimination and detoxification of drugs, xenobiotics and endogenous compounds. Catalyzes the glucuronidation of endogenous estrogen hormones such as estradiol and estrone. Contributes to bile acid (BA) detoxification by catalyzing the glucuronidation of BA substrates, which are natural detergents for dietary lipids absorption. Involved in the glucuronidation of calcidiol, which is the major circulating form of vitamin D3, essential for the regulation of calcium and phosphate homeostasis. Involved in the glucuronidation of the phytochemical ferulic acid at the phenolic or the carboxylic acid group. Involved in the glucuronidation of the AGTR1 angiotensin receptor antagonists losartan, candesartan and zolarsartan, which can inhibit the effect of angiotensin II. The chain is UDP-glucuronosyltransferase 1A3 from Rattus norvegicus (Rat).